Consider the following 262-residue polypeptide: Acyl-[acyl-carrier-protein]--UDP-N-acetylglucosamine O-acyltransferase (262 aa).

This sequence belongs to the transferase hexapeptide repeat family. LpxA subfamily. Homotrimer.

It is found in the cytoplasm. The catalysed reaction is a (3R)-hydroxyacyl-[ACP] + UDP-N-acetyl-alpha-D-glucosamine = a UDP-3-O-[(3R)-3-hydroxyacyl]-N-acetyl-alpha-D-glucosamine + holo-[ACP]. Its pathway is glycolipid biosynthesis; lipid IV(A) biosynthesis; lipid IV(A) from (3R)-3-hydroxytetradecanoyl-[acyl-carrier-protein] and UDP-N-acetyl-alpha-D-glucosamine: step 1/6. In terms of biological role, involved in the biosynthesis of lipid A, a phosphorylated glycolipid that anchors the lipopolysaccharide to the outer membrane of the cell. This chain is Acyl-[acyl-carrier-protein]--UDP-N-acetylglucosamine O-acyltransferase, found in Mannheimia succiniciproducens (strain KCTC 0769BP / MBEL55E).